The chain runs to 661 residues: Arginine--tRNA ligase, cytoplasmic (661 aa).

Positions 1–72 (MEARVAEAAA…QEEQSKTVKS (72 aa)) are could be involved in the assembly of the multisynthetase complex. L-arginine-binding positions include 201–203 (SPN), histidine 212, tyrosine 385, aspartate 389, and glutamine 413. The 'HIGH' region signature appears at 202–213 (PNIAKEMHVGHL). The segment at 530-544 (NTAAYLLYAFTRIRA) is interaction with tRNA.

Belongs to the class-I aminoacyl-tRNA synthetase family. In terms of assembly, monomer; also part of a multisubunit complex that groups tRNA ligases for Arg, Asp, Glu, Gln, Ile, Leu, Lys, Met and Pro.

The protein resides in the cytoplasm. Its subcellular location is the cytosol. The catalysed reaction is tRNA(Arg) + L-arginine + ATP = L-arginyl-tRNA(Arg) + AMP + diphosphate. Functionally, forms part of a macromolecular complex that catalyzes the attachment of specific amino acids to cognate tRNAs during protein synthesis. The protein is Arginine--tRNA ligase, cytoplasmic (RARS1) of Gallus gallus (Chicken).